The chain runs to 287 residues: uncharacterized protein (287 aa).

A run of 7 helical transmembrane segments spans residues 27–47, 66–86, 97–117, 135–155, 171–191, 205–225, and 254–274; these read LTFS…FGVQ, LGTI…VTAF, WFWG…GVLL, IVFA…LSAL, IFIW…VLNF, LFPG…VYFV, and SALF…YFIL.

It localises to the cell membrane. This is an uncharacterized protein from Mycoplasma pneumoniae (strain ATCC 29342 / M129 / Subtype 1) (Mycoplasmoides pneumoniae).